The chain runs to 568 residues: Probable inactive 1-aminocyclopropane-1-carboxylate synthase-like protein 2 (568 aa).

The tract at residues 1–21 is disordered; sequence MSHRSDTLPVPSGQRRGRVPR. Lys395 is subject to N6-(pyridoxal phosphate)lysine.

This sequence belongs to the class-I pyridoxal-phosphate-dependent aminotransferase family.

This chain is Probable inactive 1-aminocyclopropane-1-carboxylate synthase-like protein 2 (ACCSL), found in Homo sapiens (Human).